The primary structure comprises 118 residues: MARIAGVNLAIQKHVWIGLQSIYGIGRTRSRKVCDAANVAIYTKIRDLSESEIERLRVEVGKYVIEGDLRREVGMAIKRLMDLNCYRGLRHRRCLPLRGQRTRTNARTRKGPRKAIKK.

Positions 99-118 (GQRTRTNARTRKGPRKAIKK) are disordered.

The protein belongs to the universal ribosomal protein uS13 family. As to quaternary structure, part of the 30S ribosomal subunit. Forms a loose heterodimer with protein S19. Forms two bridges to the 50S subunit in the 70S ribosome.

Functionally, located at the top of the head of the 30S subunit, it contacts several helices of the 16S rRNA. In the 70S ribosome it contacts the 23S rRNA (bridge B1a) and protein L5 of the 50S subunit (bridge B1b), connecting the 2 subunits; these bridges are implicated in subunit movement. Contacts the tRNAs in the A and P-sites. In Xylella fastidiosa (strain M23), this protein is Small ribosomal subunit protein uS13.